The chain runs to 151 residues: FAD synthase (151 aa).

Residues 9–10 (TF), 14–17 (HPGH), Asp96, and Tyr123 contribute to the ATP site.

Belongs to the archaeal FAD synthase family. In terms of assembly, homodimer. Requires a divalent metal cation as cofactor.

The enzyme catalyses FMN + ATP + H(+) = FAD + diphosphate. It participates in cofactor biosynthesis; FAD biosynthesis; FAD from FMN: step 1/1. Its function is as follows. Catalyzes the transfer of the AMP portion of ATP to flavin mononucleotide (FMN) to produce flavin adenine dinucleotide (FAD) coenzyme. This chain is FAD synthase, found in Methanothermobacter thermautotrophicus (strain ATCC 29096 / DSM 1053 / JCM 10044 / NBRC 100330 / Delta H) (Methanobacterium thermoautotrophicum).